The sequence spans 448 residues: Solute carrier family 52, riboflavin transporter, member 2 (448 aa).

Transmembrane regions (helical) follow at residues 14-34, 47-67, 79-99, 105-125, and 147-167; these read LLVA…WVEL, LPSY…VVTL, VPIQ…APLW, VAGQ…ALAC, and FFLG…VQGV. N-linked (GlcNAc...) asparagine glycosylation is present at Asn178. The chain crosses the membrane as a helical span at residues 198-218; sequence WALTALLVTSAAAFQGLLLLL. Residues 228–267 form a disordered region; it reads GAGPELPLGSPGAEEEEKEEEEALPLQEPPSQAAGTIPGP. The segment covering 240–250 has biased composition (acidic residues); sequence AEEEEKEEEEA. 5 helical membrane passes run 280 to 300, 315 to 335, 342 to 362, 369 to 389, and 407 to 427; these read AFLL…LPAV, LAVV…MGVL, LVGL…LAIL, VGTT…LCVF, and ALLA…GTMF.

The protein belongs to the riboflavin transporter family.

Its subcellular location is the cell membrane. The catalysed reaction is riboflavin(in) = riboflavin(out). Riboflavin transport is Na(+)-independent but moderately pH-sensitive. Activity is strongly inhibited by riboflavin analogs, such as lumiflavin. Weakly inhibited by flavin adenine dinucleotide (FAD) and flavin mononucleotide (FMN). Functionally, plasma membrane transporter mediating the uptake by cells of the water soluble vitamin B2/riboflavin that plays a key role in biochemical oxidation-reduction reactions of the carbohydrate, lipid, and amino acid metabolism. May also act as a receptor for 4-hydroxybutyrate. Its function is as follows. (Microbial infection) In case of infection by retroviruses, acts as a cell receptor to retroviral envelopes similar to the porcine endogenous retrovirus (PERV-A). This chain is Solute carrier family 52, riboflavin transporter, member 2 (SLC52A2), found in Papio hamadryas (Hamadryas baboon).